Reading from the N-terminus, the 751-residue chain is Ribosome biogenesis protein ERB1 (751 aa).

Disordered regions lie at residues 1-140 and 289-336; these read MALT…GNVP and SEPS…DPED. Acidic residues-rich tracts occupy residues 34 to 92 and 119 to 129; these read LTDE…SDSD and IEPDYDSDSST. Positions 294–305 are enriched in pro residues; that stretch reads SQPPPLPAPKRP. The span at 323 to 336 shows a compositional bias: basic and acidic residues; that stretch reads EEEKQEWLKQDPED. WD repeat units lie at residues 410–449, 536–580, 582–621, 622–661, 665–704, and 720–751; these read HPKGRARCVSVSPDGAWAVSGDEDGVVSLWEVNVGCEIRR, PSSG…APFK, IKGAVQQVLFHPIKPHFFVATQQYVRLYNLAEQKLIKTLQ, PGIRWISSMDVHPSGDHVIVGGYDRKLCWFDLELSEKPYK, YHSRAIRSLHFHPTYPLFASSSDDGSIQIFHARVYNDLMT, and TDGLGILQVKWTPKHPWLLSAAADGTVAVWCS.

This sequence belongs to the WD repeat BOP1/ERB1 family. In terms of assembly, component of the NOP7 complex, composed of ERB1, NOP7 and YTM1. The complex is held together by ERB1, which interacts with NOP7 via its N-terminal domain and with YTM1 via a high-affinity interaction between the seven-bladed beta-propeller domains of the 2 proteins. The NOP7 complex associates with the 66S pre-ribosome.

The protein resides in the nucleus. It localises to the nucleolus. Its subcellular location is the nucleoplasm. Its function is as follows. Component of the NOP7 complex, which is required for maturation of the 25S and 5.8S ribosomal RNAs and formation of the 60S ribosome. In Coprinopsis cinerea (strain Okayama-7 / 130 / ATCC MYA-4618 / FGSC 9003) (Inky cap fungus), this protein is Ribosome biogenesis protein ERB1.